The primary structure comprises 462 residues: Nuclear factor interleukin-3-regulated protein (462 aa).

Lysine 24 is covalently cross-linked (Glycyl lysine isopeptide (Lys-Gly) (interchain with G-Cter in SUMO2)). Positions 73–136 (DAMYWEKRRK…GLISSTAYAQ (64 aa)) constitute a bZIP domain. A basic motif region spans residues 79–95 (KRRKNNEAAKRSREKRR). Residues 99 to 106 (LVLENKLI) form a leucine-zipper region. Disordered regions lie at residues 189–237 (DVSE…DDRG) and 258–302 (SPPL…IHSP). Positions 201-210 (ESSVQGSCRS) are enriched in polar residues. Residue lysine 214 forms a Glycyl lysine isopeptide (Lys-Gly) (interchain with G-Cter in SUMO2) linkage. Lysine 219 participates in a covalent cross-link: Glycyl lysine isopeptide (Lys-Gly) (interchain with G-Cter in SUMO1); alternate. Lysine 219 participates in a covalent cross-link: Glycyl lysine isopeptide (Lys-Gly) (interchain with G-Cter in SUMO2); alternate. Over residues 227 to 237 (SYTREPRDDRG) the composition is skewed to basic and acidic residues. Residues 264–274 (VNRSSSNSPRT) show a composition bias toward polar residues. Residues 299-363 (IHSPVELKHV…PIDMTSKRHF (65 aa)) are necessary for transcriptional repression and sufficient for interaction with DR1. Phosphoserine is present on serine 301. Glycyl lysine isopeptide (Lys-Gly) (interchain with G-Cter in SUMO2) cross-links involve residues lysine 306, lysine 314, lysine 326, lysine 332, lysine 337, and lysine 350. Position 353 is a phosphoserine (serine 353). Glycyl lysine isopeptide (Lys-Gly) (interchain with G-Cter in SUMO2) cross-links involve residues lysine 360, lysine 394, lysine 401, lysine 406, lysine 412, lysine 419, lysine 424, lysine 434, and lysine 448.

The protein belongs to the bZIP family. NFIL3 subfamily. As to quaternary structure, homodimer. Binds DNA as a dimer. Interacts with DR1. Interacts with PER2 and CRY2. Interacts with NR0B2. Interacts with MYSM1. In terms of tissue distribution, expressed in bladder stomach, thyroid, spinal cord, lymph node, trachea, adrenal gland, bone marrow and muscle.

It is found in the nucleus. Its function is as follows. Acts as a transcriptional regulator that recognizes and binds to the sequence 5'-[GA]TTA[CT]GTAA[CT]-3', a sequence present in many cellular and viral promoters. Represses transcription from promoters with activating transcription factor (ATF) sites. Represses promoter activity in osteoblasts. Represses transcriptional activity of PER1. Represses transcriptional activity of PER2 via the B-site on the promoter. Activates transcription from the interleukin-3 promoter in T-cells. Competes for the same consensus-binding site with PAR DNA-binding factors (DBP, HLF and TEF). Component of the circadian clock that acts as a negative regulator for the circadian expression of PER2 oscillation in the cell-autonomous core clock. Protects pro-B cells from programmed cell death. Represses the transcription of CYP2A5. Positively regulates the expression and activity of CES2 by antagonizing the repressive action of NR1D1 on CES2. Required for the development of natural killer cell precursors. This is Nuclear factor interleukin-3-regulated protein (NFIL3) from Homo sapiens (Human).